The primary structure comprises 383 residues: MSAPGSSCTEPGPPLWLLAELTYRCPLQCPYCSNPLDFARHGAELSTAEWIEVFRQARELGAAQLGFSGGEPLVRQDLSELIGAARGLGYYTNLITSGIGLSEARIAEFATAGLDHIQVSFQAADAELNDLLAGSGKAFARKLAMARAVKAQGYPMVLNFVTHRHNIDAIERIIELCLELEADYIELATCQFYGWAELNRAGLLPTRAQLERAERITNQWREKLAAQGHPCKLIFVTPDYYEERPKACMGGWASLFLDIAPDGTALPCHNARMLPVQFPNVREHSLRHIWYDSFGFNRFRGDDWLPEPCRSCDEKGRDFGGCRCQAFLLTGDAEATDPVCAKSAHHGLILDARRQAEEAPLGLERLVHRNARTSEIICRSRSE.

The region spanning 11–226 is the Radical SAM core domain; the sequence is PGPPLWLLAE…TNQWREKLAA (216 aa). Cys-25, Cys-29, and Cys-32 together coordinate [4Fe-4S] cluster.

It belongs to the radical SAM superfamily. PqqE family. In terms of assembly, interacts with PqqD. The interaction is necessary for activity of PqqE. Requires [4Fe-4S] cluster as cofactor.

It catalyses the reaction [PQQ precursor protein] + S-adenosyl-L-methionine = E-Y cross-linked-[PQQ precursor protein] + 5'-deoxyadenosine + L-methionine + H(+). Its pathway is cofactor biosynthesis; pyrroloquinoline quinone biosynthesis. Its function is as follows. Catalyzes the cross-linking of a glutamate residue and a tyrosine residue in the PqqA protein as part of the biosynthesis of pyrroloquinoline quinone (PQQ). The polypeptide is PqqA peptide cyclase (Azotobacter vinelandii (strain DJ / ATCC BAA-1303)).